The sequence spans 318 residues: NADH-ubiquinone oxidoreductase chain 1 (318 aa).

The next 8 helical transmembrane spans lie at 2–22, 70–90, 100–120, 136–156, 171–191, 231–251, 253–273, and 293–313; these read FFIN…FLTL, LFII…VPLP, LGIL…LWSG, VAQT…VLLM, HMWL…STLA, IILM…YINL, ELYS…FLWI, and FLPL…FTAG.

This sequence belongs to the complex I subunit 1 family. As to quaternary structure, core subunit of respiratory chain NADH dehydrogenase (Complex I) which is composed of 45 different subunits.

The protein resides in the mitochondrion inner membrane. The enzyme catalyses a ubiquinone + NADH + 5 H(+)(in) = a ubiquinol + NAD(+) + 4 H(+)(out). Functionally, core subunit of the mitochondrial membrane respiratory chain NADH dehydrogenase (Complex I) which catalyzes electron transfer from NADH through the respiratory chain, using ubiquinone as an electron acceptor. Essential for the catalytic activity and assembly of complex I. This Mus musculus (Mouse) protein is NADH-ubiquinone oxidoreductase chain 1 (Mtnd1).